A 49-amino-acid chain; its full sequence is Large ribosomal subunit protein bL33 (49 aa).

The protein belongs to the bacterial ribosomal protein bL33 family.

The sequence is that of Large ribosomal subunit protein bL33 from Fervidobacterium nodosum (strain ATCC 35602 / DSM 5306 / Rt17-B1).